A 473-amino-acid chain; its full sequence is Cardiolipin synthase C (473 aa).

PLD phosphodiesterase domains are found at residues 125-152 and 364-391; these read LNRRMHNKSFTVDGVVTLVGGRNIGDAY and SGASLHAKTFSIDGKTVFIGSFNFDPRS. Residues histidine 130, lysine 132, aspartate 137, histidine 369, lysine 371, and aspartate 376 contribute to the active site.

It belongs to the phospholipase D family. Cardiolipin synthase subfamily. ClsC sub-subfamily.

It catalyses the reaction a 1,2-diacyl-sn-glycero-3-phospho-(1'-sn-glycerol) + a 1,2-diacyl-sn-glycero-3-phosphoethanolamine = a cardiolipin + ethanolamine. Full activity requires coexpression with the neighboring gene ymdB. In terms of biological role, catalyzes the synthesis of cardiolipin (CL) (diphosphatidylglycerol) from phosphatidylglycerol (PG) and phosphatidylethanolamine (PE). This is Cardiolipin synthase C from Escherichia coli (strain K12).